The sequence spans 473 residues: Levansucrase (473 aa).

The first 29 residues, 1-29, serve as a signal peptide directing secretion; the sequence is MNIKKFAKQATVLTFTTALLAGGATQAFA. Trp-85, Asp-86, and Ser-164 together coordinate sucrose. Asp-86 acts as the Nucleophile in catalysis. Asp-241 serves as a coordination point for Ca(2+). Sucrose-binding residues include Arg-246 and Asp-247. The Ca(2+) site is built by Gln-272, Leu-308, Asn-310, and Asp-339. Glu-340 contributes to the sucrose binding site. Catalysis depends on Glu-342, which acts as the Proton donor/acceptor. Position 360 (Arg-360) interacts with sucrose.

The protein belongs to the glycosyl hydrolase 68 family. In terms of assembly, monomer.

The protein localises to the secreted. It carries out the reaction [6)-beta-D-fructofuranosyl-(2-&gt;](n) alpha-D-glucopyranoside + sucrose = [6)-beta-D-fructofuranosyl-(2-&gt;](n+1) alpha-D-glucopyranoside + D-glucose. With respect to regulation, ca(2+) may play an important structural role and promote stability of levansucrase. The enzyme concentration is a factor defining the molecular weight (MW) levan distribution. A bimodal distribution is reported at the usual enzyme concentrations. At low concentrations, the enzyme synthesizes high MW levan, and at high concentrations, it synthesizes low MW levan. Catalyzes the synthesis of levan, a fructose polymer, by transferring the fructosyl moiety from sucrose to a growing acceptor molecule. Also displays sucrose hydrolase activity. At low sucrose concentrations, functions as an hydrolase with water as acceptor, whereas at higher substrate concentrations it adds fructosyl units to a growing levan chain. The polypeptide is Levansucrase (Bacillus subtilis (strain 168)).